A 62-amino-acid polypeptide reads, in one-letter code: Large ribosomal subunit protein bL28 (62 aa).

The disordered stretch occupies residues 1-28; sequence MARKCVITGRKSRSGNSRSHAMNASKRT. The segment covering 14-26 has biased composition (polar residues); sequence SGNSRSHAMNASK.

The protein belongs to the bacterial ribosomal protein bL28 family.

This Bacillus licheniformis (strain ATCC 14580 / DSM 13 / JCM 2505 / CCUG 7422 / NBRC 12200 / NCIMB 9375 / NCTC 10341 / NRRL NRS-1264 / Gibson 46) protein is Large ribosomal subunit protein bL28.